A 66-amino-acid polypeptide reads, in one-letter code: uncharacterized protein (66 aa).

A helical transmembrane segment spans residues 11 to 31; it reads PFPLLGVWIIVIIIVAVIGLL.

The protein resides in the membrane. This is an uncharacterized protein from Chenopodium amaranticolor (Quinoa).